Consider the following 92-residue polypeptide: Small ribosomal subunit protein uS15c (92 aa).

This sequence belongs to the universal ribosomal protein uS15 family. As to quaternary structure, part of the 30S ribosomal subunit.

Its subcellular location is the plastid. It is found in the chloroplast. In Lemna minor (Common duckweed), this protein is Small ribosomal subunit protein uS15c (rps15-A).